A 633-amino-acid polypeptide reads, in one-letter code: Proline-rich protein LAS17 (633 aa).

Positions 16–127 constitute a WH1 domain; sequence LPKASNKIID…KRVQKRERYA (112 aa). 2 disordered regions span residues 145–545 and 563–606; these read REEQ…TTGD and ALRK…PASL. Low complexity predominate over residues 192 to 215; it reads AETFDSDQTSSFSDINSTTASAPT. Composition is skewed to pro residues over residues 216 to 225 and 238 to 256; these read TPAPALPPAS and SLPPLPNQFAPLPDPPQHN. Composition is skewed to low complexity over residues 257–269 and 307–322; these read SPPQNNAPSQPQS and PQQNRPLPQLPNRNNR. Thr334 carries the phosphothreonine modification. Position 337 is a phosphoserine (Ser337). The segment covering 342-357 has biased composition (pro residues); the sequence is PAPPPPPRRGPAPPPP. Polar residues-rich tracts occupy residues 363 to 376, 399 to 414, and 454 to 465; these read TSNTLNSAGGNSLL, NVTMQQNPQQYNNSNR, and PQNTQAPSQATN. The segment covering 479–488 has biased composition (low complexity); it reads QSQIPQSAPS. Residues 547 to 567 enclose the WH2 domain; that stretch reads GRDALLASIRGAGGIGALRKV. Ser588 bears the Phosphoserine mark.

In terms of assembly, interacts with KRE6, LSB3, LSB5 and YSC84.

In Saccharomyces cerevisiae (strain ATCC 204508 / S288c) (Baker's yeast), this protein is Proline-rich protein LAS17 (LAS17).